Reading from the N-terminus, the 812-residue chain is Outer membrane usher protein FaeD (812 aa).

The first 35 residues, 1–35 (MKKYVTTKSVQPVAFRLTTLSLVMSAVLGSASVIA), serve as a signal peptide directing secretion. A disulfide bond links Cys793 and Cys811.

The protein belongs to the fimbrial export usher family.

The protein localises to the cell outer membrane. Involved in the export and assembly of K88ab fimbrial subunits across the outer membrane. This is Outer membrane usher protein FaeD (faeD) from Escherichia coli.